The sequence spans 454 residues: Flavonoid 3-O-glucosyltransferase (454 aa).

Residue Thr-25 participates in UDP binding. His-26 functions as the Proton acceptor in the catalytic mechanism. Myricetin is bound at residue Arg-89. Asp-124 acts as the Charge relay in catalysis. Positions 155, 192, and 202 each coordinate myricetin. 4 residues coordinate UDP: Ser-282, Ser-308, Trp-334, and Ala-335. Ala-335, Gln-337, His-352, Trp-355, Asn-356, Ser-357, and Glu-360 together coordinate UDP-alpha-D-glucose. Residue His-352 participates in UDP binding. Residues Asn-356, Ser-357, and Glu-360 each contribute to the UDP site. Gly-375 is a binding site for myricetin. Positions 376 and 377 each coordinate UDP-alpha-D-glucose.

This sequence belongs to the UDP-glycosyltransferase family. In terms of tissue distribution, highly expressed in flower buds, flowers and pods. Lower expression in leaves, petioles and stems.

It functions in the pathway secondary metabolite biosynthesis; flavonoid biosynthesis. In terms of biological role, catalyzes the glycosylation of flavonoids at the 3-O-position. Glycosylates the 7-O-position if the 3-O-position is not available. Also able to perform 3-O-glycosylation of anthocyanidins. In Medicago truncatula (Barrel medic), this protein is Flavonoid 3-O-glucosyltransferase (UGT78G1).